Here is a 341-residue protein sequence, read N- to C-terminus: Two-component response regulator EHD1 (341 aa).

The Response regulatory domain maps to 12–127; sequence RVLVIDDDCS…ELSNIWQHIF (116 aa). D63 is subject to 4-aspartylphosphate. Residues 195–254 enclose the HTH myb-type domain; it reads DLGKSRLTWTTQLHRQFIAAVNHLGEDKAVPKKILGIMKVKHLTREQVASHLQKYRMQLK. The H-T-H motif DNA-binding region spans 225–250; that stretch reads PKKILGIMKVKHLTREQVASHLQKYR.

In terms of processing, two-component system major event consists of a His-to-Asp phosphorelay between a sensor histidine kinase (HK) and a response regulator (RR). In plants, the His-to-Asp phosphorelay involves an additional intermediate named Histidine-containing phosphotransfer protein (HPt). This multistep phosphorelay consists of a His-Asp-His-Asp sequential transfer of a phosphate group between first a His and an Asp of the HK protein, followed by the transfer to a conserved His of the HPt protein and finally the transfer to an Asp in the receiver domain of the RR protein.

It is found in the nucleus. In terms of biological role, transcriptional activator that acts as a floral inducer to promote short-day (SD) flowering pathway. Activates Hd3a and other FT-like genes independently from Hd1. May also activate MADS-box transcription factors involved in flowering regulation. This is Two-component response regulator EHD1 (EHD1) from Oryza sativa subsp. indica (Rice).